The following is a 731-amino-acid chain: 1,4-alpha-glucan branching enzyme GlgB (731 aa).

Aspartate 408 (nucleophile) is an active-site residue. The active-site Proton donor is the glutamate 461.

The protein belongs to the glycosyl hydrolase 13 family. GlgB subfamily. In terms of assembly, monomer.

The catalysed reaction is Transfers a segment of a (1-&gt;4)-alpha-D-glucan chain to a primary hydroxy group in a similar glucan chain.. It participates in glycan biosynthesis; glycogen biosynthesis. In terms of biological role, catalyzes the formation of the alpha-1,6-glucosidic linkages in glycogen by scission of a 1,4-alpha-linked oligosaccharide from growing alpha-1,4-glucan chains and the subsequent attachment of the oligosaccharide to the alpha-1,6 position. This Corynebacterium efficiens (strain DSM 44549 / YS-314 / AJ 12310 / JCM 11189 / NBRC 100395) protein is 1,4-alpha-glucan branching enzyme GlgB.